The chain runs to 427 residues: Endothelin-1 receptor (427 aa).

The N-terminal stretch at 1 to 20 (METFWLRLSFWVALVGGVIS) is a signal peptide. At 21 to 80 (DNPESYSTNLSIHVDSVATFHGTELSFVVTTHQPTNLALPSNGSMHNYCPQQTKITSAFK) the chain is on the extracellular side. N-linked (GlcNAc...) asparagine glycosylation is found at N29 and N62. Residues 81–102 (YINTVISCTIFIVGMVGNATLL) traverse the membrane as a helical segment. Over 103-112 (RIIYQNKCMR) the chain is Cytoplasmic. Residues 113–132 (NGPNALIASLALGDLIYVVI) form a helical membrane-spanning segment. The Extracellular segment spans residues 133–159 (DLPINVFKLLAGRWPFEQNDFGVFLCK). C158 and C239 form a disulfide bridge. The helical transmembrane segment at 160-181 (LFPFLQKSSVGITVLNLCALSV) threads the bilayer. Residues 182 to 205 (DRYRAVASWSRVQGIGIPLVTAIE) are Cytoplasmic-facing. A helical transmembrane segment spans residues 206 to 229 (IVSIWILSFILAIPEAIGFVMVPF). At 230–256 (EYKGAQHRTCMLNATSKFMEFYQDVKD) the chain is on the extracellular side. Residues 257-278 (WWLFGFYFCMPLVCTAIFYTLM) form a helical membrane-spanning segment. Residues 279–306 (TCEMLNRRNGSLRIALSEHLKQRREVAK) are Cytoplasmic-facing. A helical transmembrane segment spans residues 307–328 (TVFCLVVIFALCWFPLHLSRIL). Residues 329-347 (KKTVYDEMDTNRCELLSFL) are Extracellular-facing. Residues 348-372 (LLMDYIGINLATMNSCINPIALYFV) form a helical membrane-spanning segment. At 373–427 (SKKFKNCFQSCLCCCCYQSKSLMTSVPMNGTSIQWKNHEQNNHNTERSSHKDSIN) the chain is on the cytoplasmic side. S425 is modified (phosphoserine).

This sequence belongs to the G-protein coupled receptor 1 family. Endothelin receptor subfamily. EDNRA sub-subfamily. Interacts with HDAC7 and KAT5.

It localises to the cell membrane. In terms of biological role, receptor for endothelin-1. Mediates its action by association with G proteins that activate a phosphatidylinositol-calcium second messenger system. The rank order of binding affinities for ET-A is: ET1 &gt; ET2 &gt;&gt; ET3. The sequence is that of Endothelin-1 receptor from Bos taurus (Bovine).